The primary structure comprises 441 residues: ATP-dependent protease ATPase subunit HslU (441 aa).

ATP is bound by residues Ile-18, Gly-60 to Glu-65, Asp-254, Glu-319, and Arg-391.

It belongs to the ClpX chaperone family. HslU subfamily. As to quaternary structure, a double ring-shaped homohexamer of HslV is capped on each side by a ring-shaped HslU homohexamer. The assembly of the HslU/HslV complex is dependent on binding of ATP.

Its subcellular location is the cytoplasm. Functionally, ATPase subunit of a proteasome-like degradation complex; this subunit has chaperone activity. The binding of ATP and its subsequent hydrolysis by HslU are essential for unfolding of protein substrates subsequently hydrolyzed by HslV. HslU recognizes the N-terminal part of its protein substrates and unfolds these before they are guided to HslV for hydrolysis. This Shewanella piezotolerans (strain WP3 / JCM 13877) protein is ATP-dependent protease ATPase subunit HslU.